A 181-amino-acid polypeptide reads, in one-letter code: MQDNRFFILMILLVFSTSLNQGQKLKANDRRSAGLVPYPRIGRNSEISSFSRSERALGLIHQPRIGRSDVSSFDNLNRFHDLSSDADIEFYAMDMDPLLSPDYEDYASKPIALKYADKLQKDNSWLMPDHIHGYKDFHFAQKINDPRLYYSILRDSRNTQGQGGYTPRLGRENERDTANFL.

Residues 1–22 (MQDNRFFILMILLVFSTSLNQG) form the signal peptide. Positions 23–29 (QKLKAND) are excised as a propeptide. Isoleucine 41 carries the isoleucine amide modification. Residues 44 to 54 (NSEISSFSRSE) constitute a propeptide that is removed on maturation. Position 65 is an isoleucine amide (isoleucine 65). Positions 68 to 181 (SDVSSFDNLN…ENERDTANFL (114 aa)) are excised as a propeptide. A disordered region spans residues 159 to 181 (TQGQGGYTPRLGRENERDTANFL). Positions 169-181 (LGRENERDTANFL) are enriched in basic and acidic residues.

Post-translationally, a pyrokinin potentially constituted by residues Asn-158 to Gly-170 has so far not been detected and might be completely absent in ants. Periviscerokinin 1 and 2 are expressed in central brain, antennal lobes and gnathal, thoracic and abominal ganglia. Periviscerokinin 2 is also expressed in the retrocerebral complex (at protein level).

It localises to the secreted. Periviscerokinins mediate visceral muscle contractile activity (myotropic activity). This Camponotus floridanus (Florida carpenter ant) protein is CAPA peptides.